Here is a 228-residue protein sequence, read N- to C-terminus: L-ribulose-5-phosphate 4-epimerase UlaF (228 aa).

Substrate is bound by residues 26-27 (GN), 43-44 (SG), and 72-73 (SS). Zn(2+)-binding residues include D74, H93, and H95. The active-site Proton donor/acceptor is the D118. H167 is a Zn(2+) binding site. Catalysis depends on Y225, which acts as the Proton donor/acceptor.

The protein belongs to the aldolase class II family. AraD/FucA subfamily. Zn(2+) is required as a cofactor.

The enzyme catalyses L-ribulose 5-phosphate = D-xylulose 5-phosphate. It participates in cofactor degradation; L-ascorbate degradation; D-xylulose 5-phosphate from L-ascorbate: step 4/4. Functionally, catalyzes the isomerization of L-ribulose 5-phosphate to D-xylulose 5-phosphate. Is involved in the anaerobic L-ascorbate utilization. The chain is L-ribulose-5-phosphate 4-epimerase UlaF from Shigella sonnei (strain Ss046).